The primary structure comprises 217 residues: Small ribosomal subunit protein uS2 (217 aa).

It belongs to the universal ribosomal protein uS2 family.

The polypeptide is Small ribosomal subunit protein uS2 (Korarchaeum cryptofilum (strain OPF8)).